A 519-amino-acid polypeptide reads, in one-letter code: Cytochrome P450 88A1 (519 aa).

Residues 1 to 21 (MLGVGMAAAVLLGAVALLLAD) form a helical membrane-spanning segment. Cysteine 466 contacts heme.

It belongs to the cytochrome P450 family. It depends on heme as a cofactor. As to expression, expressed in roots, developing leaves, the vegetative meristem, and suspension culture cells.

The protein resides in the membrane. It participates in plant hormone biosynthesis; gibberellin biosynthesis. The protein is Cytochrome P450 88A1 (CYP88A1) of Zea mays (Maize).